The chain runs to 193 residues: Segregation and condensation protein B (193 aa).

The protein belongs to the ScpB family. Homodimer. Homodimerization may be required to stabilize the binding of ScpA to the Smc head domains. Component of a cohesin-like complex composed of ScpA, ScpB and the Smc homodimer, in which ScpA and ScpB bind to the head domain of Smc. The presence of the three proteins is required for the association of the complex with DNA.

It is found in the cytoplasm. Participates in chromosomal partition during cell division. May act via the formation of a condensin-like complex containing Smc and ScpA that pull DNA away from mid-cell into both cell halves. The polypeptide is Segregation and condensation protein B (Streptococcus thermophilus (strain CNRZ 1066)).